A 219-amino-acid chain; its full sequence is Factor in the germline alpha (219 aa).

Positions 65-117 (ERRRVANAKERERIKNLNRGFARLKALVPFLPQSRKPSKVDILKGATEYIQVL) constitute a bHLH domain. Residues 124–151 (AKDSKKQDPDEQSYSNNSSESHTSSARQ) form a disordered region. Low complexity predominate over residues 136 to 148 (SYSNNSSESHTSS).

As to quaternary structure, heterodimer with TCF3/isoform E12. Germ cells. Expressed in the fetal ovary, but not by a range of other tissues. Expression increases across mid-gestation, rising some 40-fold by the time of primordial follicle formation.

The protein resides in the nucleus. Functionally, germline specific transcription factor implicated in postnatal oocyte-specific gene expression. Plays a key regulatory role in the expression of multiple oocyte-specific genes, including those that initiate folliculogenesis and those that encode the zona pellucida (ZP1, ZP2 and ZP3) required for fertilization and early embryonic survival. Essential for oocytes to survive and form primordial follicles. The persistence of FIGLA in adult females suggests that it may regulate additional pathways that are essential for normal ovarian development. Binds to the E-box (5'-CANNTG-3') of the ZPs (ZP1, ZP2, ZP3) promoters. This Homo sapiens (Human) protein is Factor in the germline alpha (FIGLA).